Here is a 197-residue protein sequence, read N- to C-terminus: Ribosome maturation factor RimM (197 aa).

Residues 99–174 (EDEFYQVDLI…LVVEPVAAGL (76 aa)) enclose the PRC barrel domain.

This sequence belongs to the RimM family. Binds ribosomal protein uS19.

The protein localises to the cytoplasm. Functionally, an accessory protein needed during the final step in the assembly of 30S ribosomal subunit, possibly for assembly of the head region. Essential for efficient processing of 16S rRNA. May be needed both before and after RbfA during the maturation of 16S rRNA. It has affinity for free ribosomal 30S subunits but not for 70S ribosomes. The chain is Ribosome maturation factor RimM from Bartonella quintana (strain Toulouse) (Rochalimaea quintana).